Reading from the N-terminus, the 247-residue chain is 2,3-bisphosphoglycerate-dependent phosphoglycerate mutase (247 aa).

Substrate contacts are provided by residues 8–15 (RHGESVWN), 21–22 (TG), Arg-60, 87–90 (ERHY), Lys-98, 114–115 (RR), and 183–184 (GN). His-9 serves as the catalytic Tele-phosphohistidine intermediate. Glu-87 (proton donor/acceptor) is an active-site residue.

Belongs to the phosphoglycerate mutase family. BPG-dependent PGAM subfamily.

The catalysed reaction is (2R)-2-phosphoglycerate = (2R)-3-phosphoglycerate. Its pathway is carbohydrate degradation; glycolysis; pyruvate from D-glyceraldehyde 3-phosphate: step 3/5. Functionally, catalyzes the interconversion of 2-phosphoglycerate and 3-phosphoglycerate. This Thermobifida fusca (strain YX) protein is 2,3-bisphosphoglycerate-dependent phosphoglycerate mutase.